The following is a 289-amino-acid chain: Transmembrane protein 163 (289 aa).

The segment at 1-65 (MEPAAGIQRR…ESGQFSDGLE (65 aa)) is disordered. The Cytoplasmic segment spans residues 1-88 (MEPAAGIQRR…HEAQNYRKKA (88 aa)). Ser11 carries the post-translational modification Phosphoserine. Pro residues predominate over residues 16–36 (TVPPPPRGHAPPAAAPGPAPL). The interval 42-72 (EPPQLEEERQVRISESGQFSDGLEDRGLLES) is required for interaction with MCOLN1. Phosphoserine is present on residues Ser55, Ser57, and Ser61. A helical membrane pass occupies residues 89-109 (LWVSWFSIIVTLALAVAAFTV). The Extracellular segment spans residues 110-116 (SVMRYSA). A helical membrane pass occupies residues 117–137 (SAFGFAFDAILDVLSSAIVLW). Over 138 to 150 (RYSNAAAVHSAHR) the chain is Cytoplasmic. A helical transmembrane segment spans residues 151 to 171 (EYIACVILGVIFLLSSICIVV). Residues 172-187 (KAIHDLSTRLLPEVDD) are Extracellular-facing. Residues 188 to 208 (FLFSVSILSGILCSILAVLKF) form a helical membrane-spanning segment. The Cytoplasmic segment spans residues 209 to 217 (MLGKVLTSR). A helical membrane pass occupies residues 218–238 (ALITDGFNSLVGGVMGFSILL). The Extracellular portion of the chain corresponds to 239 to 255 (SAEVFKHDSAVWYLDGS). Residues 256–276 (IGVLIGLTIFAYGVKLLIDMV) traverse the membrane as a helical segment. Topologically, residues 277-289 (PRVRQTRHYEMFE) are cytoplasmic.

Belongs to the TMEM163 family. As to quaternary structure, homodimer. Interacts with MCOLN1/TRPML1. Interacts with SLC30A1, SLC30A2, SLC30A3 and SLC30A4. Widely expressed. High expression is detected in brain, lung and testis.

It localises to the cytoplasmic vesicle. The protein resides in the secretory vesicle. It is found in the synaptic vesicle membrane. Its subcellular location is the early endosome membrane. The protein localises to the late endosome membrane. It localises to the lysosome membrane. The protein resides in the cell membrane. The catalysed reaction is Zn(2+)(in) = Zn(2+)(out). Its function is as follows. Zinc ion transporter that mediates zinc efflux and plays a crucial role in intracellular zinc homeostasis. Binds the divalent cations Zn(2+), Ni(2+), and to a minor extent Cu(2+). Is a functional modulator of P2X purinoceptors, including P2RX1, P2RX3, P2RX4 and P2RX7. Plays a role in central nervous system development and is required for myelination, and survival and proliferation of oligodendrocytes. This Homo sapiens (Human) protein is Transmembrane protein 163 (TMEM163).